A 196-amino-acid polypeptide reads, in one-letter code: Putative 3-methyladenine DNA glycosylase (196 aa).

The protein belongs to the DNA glycosylase MPG family.

This Bacillus subtilis (strain 168) protein is Putative 3-methyladenine DNA glycosylase (yxlJ).